Reading from the N-terminus, the 625-residue chain is Chaperone protein HtpG (625 aa).

Residues 1–337 form an a; substrate-binding region; the sequence is MSTNQETRGF…TNDLPLNVSR (337 aa). A b region spans residues 338–554; sequence EILQENKITA…NDEMTTQMAK (217 aa). The c stretch occupies residues 555–625; sequence LFAAMGQKAP…FIKRMNKLLG (71 aa).

The protein belongs to the heat shock protein 90 family. Homodimer.

It is found in the cytoplasm. In terms of biological role, molecular chaperone. Has ATPase activity. The polypeptide is Chaperone protein HtpG (Actinobacillus pleuropneumoniae serotype 3 (strain JL03)).